A 309-amino-acid chain; its full sequence is Homoserine kinase (309 aa).

ATP is bound at residue 91-101; it reads PIGSGLGSSAC.

It belongs to the GHMP kinase family. Homoserine kinase subfamily.

The protein localises to the cytoplasm. It carries out the reaction L-homoserine + ATP = O-phospho-L-homoserine + ADP + H(+). Its pathway is amino-acid biosynthesis; L-threonine biosynthesis; L-threonine from L-aspartate: step 4/5. Catalyzes the ATP-dependent phosphorylation of L-homoserine to L-homoserine phosphate. This chain is Homoserine kinase, found in Pectobacterium atrosepticum (strain SCRI 1043 / ATCC BAA-672) (Erwinia carotovora subsp. atroseptica).